Here is a 262-residue protein sequence, read N- to C-terminus: KTSTRTRCAFEVAARDQGAGVTYLEPSASQIGHKESIKDTARVLGRMYDGIEYRGFAQETVEELAKYAGVPVFNGLTNEFHPTQMLADALTMREHSGKPLNQTAFAYIGDARYNMANSLLVLGAKLGMDVRIGAPKTLWPSENIVARARAVAEETGGKILLTENTKEAVKGADFIHTDVWVSMGEPKEVWQERIDLLKDYRVTPELMAVSGNSKVKFMHCLPAFHNRETKVGEWIYETFGLNGVEVTEEVFESPASIVFDQA.

Carbamoyl phosphate contacts are provided by residues 3 to 7, Q30, R54, and 81 to 84; these read STRTR and HPTQ. L-ornithine contacts are provided by residues N114, D178, and 182–183; that span reads SM. Carbamoyl phosphate-binding positions include 219-222 and T247; that span reads HCLP.

This sequence belongs to the aspartate/ornithine carbamoyltransferase superfamily. OTCase family.

It localises to the cytoplasm. The enzyme catalyses carbamoyl phosphate + L-ornithine = L-citrulline + phosphate + H(+). It functions in the pathway amino-acid biosynthesis; L-arginine biosynthesis; L-arginine from L-ornithine and carbamoyl phosphate: step 1/3. This chain is Ornithine carbamoyltransferase (argF), found in Neisseria cinerea.